The sequence spans 156 residues: Endogenous retrovirus group K member 10 Pro protein (156 aa).

Residues 21–96 (FEGLVDTGAD…IPLNLWGRDL (76 aa)) form the Peptidase A2 domain. Asp26 is an active-site residue. In terms of domain architecture, G-patch spans 111-156 (YSPTSQKIMTKMGYIPGKGLGKNEDGIKVPVEAKINQEREGIGYPF).

Belongs to the peptidase A2 family. HERV class-II K(HML-2) subfamily. In terms of assembly, active as a homodimer. In terms of processing, autoproteolytically processed at the N-terminus. Expected C-terminal autoprocessing not detected. The sequence shown is that of the processed Pro protein.

The enzyme catalyses Processing at the authentic HIV-1 PR recognition site and release of the mature p17 matrix and the p24 capsid protein, as a result of the cleavage of the -SQNY-|-PIVQ- cleavage site.. Resistant to a number of clinically useful HIV-1 PR inhibitors. Inhibited by cyclic urea SD146. In terms of biological role, retroviral proteases have roles in processing of the primary translation products and the maturation of the viral particle. Endogenous Pro proteins may have kept, lost or modified their original function during evolution. This endogenous protein has retained most of the characteristics of retroviral proteases. The protein is Endogenous retrovirus group K member 10 Pro protein (ERVK-10) of Homo sapiens (Human).